The primary structure comprises 226 residues: uncharacterized protein (226 aa).

The ABC transporter domain occupies 4-226; sequence LQFQQVGYWY…FTVKENVAVV (223 aa). An ATP-binding site is contributed by 38–45; that stretch reads GTSGTGKT.

Belongs to the ABC transporter superfamily.

This is an uncharacterized protein from Bacillus subtilis (strain 168).